A 310-amino-acid chain; its full sequence is Probable deoxyhypusine synthase (310 aa).

Lysine 284 functions as the Nucleophile in the catalytic mechanism.

Belongs to the deoxyhypusine synthase family. NAD(+) serves as cofactor.

It catalyses the reaction [eIF5A protein]-L-lysine + spermidine = [eIF5A protein]-deoxyhypusine + propane-1,3-diamine. The protein operates within protein modification; eIF5A hypusination. Catalyzes the NAD-dependent oxidative cleavage of spermidine and the subsequent transfer of the butylamine moiety of spermidine to the epsilon-amino group of a specific lysine residue of the eIF-5A precursor protein to form the intermediate deoxyhypusine residue. This Thermoplasma acidophilum (strain ATCC 25905 / DSM 1728 / JCM 9062 / NBRC 15155 / AMRC-C165) protein is Probable deoxyhypusine synthase (dys).